We begin with the raw amino-acid sequence, 401 residues long: Argininosuccinate synthase (401 aa).

ATP is bound by residues 8–16 (AYSGGLDTS) and A35. Y86 and S91 together coordinate L-citrulline. G116 lines the ATP pocket. L-aspartate-binding residues include T118, N122, and D123. N122 is a binding site for L-citrulline. L-citrulline contacts are provided by R126, S175, S184, E260, and Y272.

This sequence belongs to the argininosuccinate synthase family. Type 1 subfamily. Homotetramer.

It localises to the cytoplasm. The catalysed reaction is L-citrulline + L-aspartate + ATP = 2-(N(omega)-L-arginino)succinate + AMP + diphosphate + H(+). It functions in the pathway amino-acid biosynthesis; L-arginine biosynthesis; L-arginine from L-ornithine and carbamoyl phosphate: step 2/3. The protein is Argininosuccinate synthase of Carboxydothermus hydrogenoformans (strain ATCC BAA-161 / DSM 6008 / Z-2901).